Consider the following 392-residue polypeptide: Ribonuclease D (392 aa).

The 167-residue stretch at Leu-12 to Leu-178 folds into the 3'-5' exonuclease domain. Residues Asn-217 to Glu-298 form the HRDC domain.

This sequence belongs to the RNase D family. A divalent metal cation serves as cofactor.

Its subcellular location is the cytoplasm. The enzyme catalyses Exonucleolytic cleavage that removes extra residues from the 3'-terminus of tRNA to produce 5'-mononucleotides.. Functionally, exonuclease involved in the 3' processing of various precursor tRNAs. Initiates hydrolysis at the 3'-terminus of an RNA molecule and releases 5'-mononucleotides. The protein is Ribonuclease D of Acidiphilium cryptum (strain JF-5).